The sequence spans 271 residues: Putative pyruvate, phosphate dikinase regulatory protein (271 aa).

ADP is bound at residue 150–157; it reads GVSRTSKT.

Belongs to the pyruvate, phosphate/water dikinase regulatory protein family. PDRP subfamily.

The catalysed reaction is N(tele)-phospho-L-histidyl/L-threonyl-[pyruvate, phosphate dikinase] + ADP = N(tele)-phospho-L-histidyl/O-phospho-L-threonyl-[pyruvate, phosphate dikinase] + AMP + H(+). The enzyme catalyses N(tele)-phospho-L-histidyl/O-phospho-L-threonyl-[pyruvate, phosphate dikinase] + phosphate + H(+) = N(tele)-phospho-L-histidyl/L-threonyl-[pyruvate, phosphate dikinase] + diphosphate. Its function is as follows. Bifunctional serine/threonine kinase and phosphorylase involved in the regulation of the pyruvate, phosphate dikinase (PPDK) by catalyzing its phosphorylation/dephosphorylation. The chain is Putative pyruvate, phosphate dikinase regulatory protein from Oceanobacillus iheyensis (strain DSM 14371 / CIP 107618 / JCM 11309 / KCTC 3954 / HTE831).